Consider the following 137-residue polypeptide: Bombinin-like peptides 2 (137 aa).

A signal peptide spans 1–18 (MNFKYIVAVSILIASAYA). The residue at position 70 (Asn-70) is an Asparagine amide. The tract at residues 92-112 (DSLEHPEEASEKETRGFNQEE) is disordered. At Ile-136 the chain carries Isoleucine amide.

This sequence belongs to the bombinin family. As to expression, expressed by the skin glands.

The protein localises to the secreted. Functionally, bombinin-like peptide 2 has antimicrobial activity, but no hemolytic activity. Preliminary evidence indicates that this peptide does not lyse and thus kill the bacteria by its antimicrobial activity. Its function is as follows. Bombinin H2 has antibacterial and hemolytic activity. The chain is Bombinin-like peptides 2 from Bombina variegata (Yellow-bellied toad).